The chain runs to 261 residues: Enolase-phosphatase E1 (261 aa).

Residues Asp16 and Glu18 each contribute to the Mg(2+) site. Residues 153–154 (SS) and Lys187 contribute to the substrate site. Asp212 lines the Mg(2+) pocket.

The protein belongs to the HAD-like hydrolase superfamily. MasA/MtnC family. As to quaternary structure, monomer. Requires Mg(2+) as cofactor.

Its subcellular location is the cytoplasm. It localises to the nucleus. It catalyses the reaction 5-methylsulfanyl-2,3-dioxopentyl phosphate + H2O = 1,2-dihydroxy-5-(methylsulfanyl)pent-1-en-3-one + phosphate. Its pathway is amino-acid biosynthesis; L-methionine biosynthesis via salvage pathway; L-methionine from S-methyl-5-thio-alpha-D-ribose 1-phosphate: step 3/6. It functions in the pathway amino-acid biosynthesis; L-methionine biosynthesis via salvage pathway; L-methionine from S-methyl-5-thio-alpha-D-ribose 1-phosphate: step 4/6. Bifunctional enzyme that catalyzes the enolization of 2,3-diketo-5-methylthiopentyl-1-phosphate (DK-MTP-1-P) into the intermediate 2-hydroxy-3-keto-5-methylthiopentenyl-1-phosphate (HK-MTPenyl-1-P), which is then dephosphorylated to form the acireductone 1,2-dihydroxy-3-keto-5-methylthiopentene (DHK-MTPene). The polypeptide is Enolase-phosphatase E1 (Bos taurus (Bovine)).